We begin with the raw amino-acid sequence, 202 residues long: N-(5'-phosphoribosyl)anthranilate isomerase (202 aa).

Belongs to the TrpF family.

The catalysed reaction is N-(5-phospho-beta-D-ribosyl)anthranilate = 1-(2-carboxyphenylamino)-1-deoxy-D-ribulose 5-phosphate. The protein operates within amino-acid biosynthesis; L-tryptophan biosynthesis; L-tryptophan from chorismate: step 3/5. The sequence is that of N-(5'-phosphoribosyl)anthranilate isomerase from Geobacter metallireducens (strain ATCC 53774 / DSM 7210 / GS-15).